Here is a 548-residue protein sequence, read N- to C-terminus: Cilia- and flagella-associated protein 97 (548 aa).

Phosphoserine is present on residues S8 and S19. 3 disordered regions span residues N85–N297, L407–L431, and Y497–H548. The segment covering G91–N107 has biased composition (basic and acidic residues). Residues T112–S121 show a composition bias toward low complexity. The segment covering D152–S161 has biased composition (acidic residues). T155 carries the post-translational modification Phosphothreonine. Phosphoserine is present on residues S160 and S161. The segment covering K191–S209 has biased composition (low complexity). Polar residues predominate over residues D214 to K237. At S235 the chain carries Phosphoserine. Basic residues predominate over residues Q238–A248. S259 bears the Phosphoserine mark. Positions T264–K289 are enriched in polar residues. Residues R383–K460 are a coiled coil. Polar residues-rich tracts occupy residues S504–S514 and I537–H548.

This sequence belongs to the CFAP97 family.

In Rattus norvegicus (Rat), this protein is Cilia- and flagella-associated protein 97.